A 43-amino-acid chain; its full sequence is Cytochrome b559 subunit beta (43 aa).

A helical transmembrane segment spans residues 18–34 (WLAVHTLAVPSVFFLGA). H22 contributes to the heme binding site.

Belongs to the PsbE/PsbF family. In terms of assembly, heterodimer of an alpha subunit and a beta subunit. PSII is composed of 1 copy each of membrane proteins PsbA, PsbB, PsbC, PsbD, PsbE, PsbF, PsbH, PsbI, PsbJ, PsbK, PsbL, PsbM, PsbT, PsbX, PsbY, PsbZ, Psb30/Ycf12, peripheral proteins PsbO, CyanoQ (PsbQ), PsbU, PsbV and a large number of cofactors. It forms dimeric complexes. Heme b is required as a cofactor.

It localises to the cellular thylakoid membrane. Its function is as follows. This b-type cytochrome is tightly associated with the reaction center of photosystem II (PSII). PSII is a light-driven water:plastoquinone oxidoreductase that uses light energy to abstract electrons from H(2)O, generating O(2) and a proton gradient subsequently used for ATP formation. It consists of a core antenna complex that captures photons, and an electron transfer chain that converts photonic excitation into a charge separation. The chain is Cytochrome b559 subunit beta from Picosynechococcus sp. (strain ATCC 27264 / PCC 7002 / PR-6) (Agmenellum quadruplicatum).